The following is a 205-amino-acid chain: Macrophage immunometabolism regulator (205 aa).

The tract at residues 1–40 (MEVDINGVNRTNNSVPSTAEGSSPSKPDPEKPRCSSTPCS) is disordered. Residues 8–25 (VNRTNNSVPSTAEGSSPS) are compositionally biased toward polar residues.

The protein belongs to the UNC119-binding protein family. In terms of assembly, interacts with unc119 family proteins; interaction preferentially takes place when unc119 proteins are unliganded with myristoylated proteins.

It is found in the cytoplasm. The protein localises to the cell projection. It localises to the cilium. In terms of biological role, may play a role in immune regulation through regulation of the macrophage function. May also play a role in trafficking of proteins via its interaction with unc119 family cargo adapters. May play a role in ciliary membrane localization. The protein is Macrophage immunometabolism regulator (macir) of Xenopus laevis (African clawed frog).